The following is a 132-amino-acid chain: UPF0299 membrane protein YohJ (132 aa).

At 1 to 6 (MSKTLN) the chain is on the periplasmic side. The helical transmembrane segment at 7-27 (IIWQYLRAFVLIYACLYAGIF) threads the bilayer. The Cytoplasmic portion of the chain corresponds to 28 to 30 (IAS). The chain crosses the membrane as a helical span at residues 31–51 (LLPVTIPGSIIGMLILFVLLA). Topologically, residues 52-62 (LQILPAKWVNP) are periplasmic. The helical transmembrane segment at 63–83 (GCYVLIRYMALLFVPIGVGVM) threads the bilayer. The Cytoplasmic segment spans residues 84 to 92 (QYFDLLRAQ). A helical membrane pass occupies residues 93 to 113 (FGPVVVSCAISTLVVFLVVSW). Residues 114–132 (SSQLVHGERKVVGQKGSEE) lie on the Periplasmic side of the membrane.

Belongs to the UPF0299 family.

The protein resides in the cell inner membrane. The chain is UPF0299 membrane protein YohJ (yohJ) from Escherichia coli O157:H7.